A 75-amino-acid chain; its full sequence is Putative membrane protein insertion efficiency factor (75 aa).

This sequence belongs to the UPF0161 family.

It is found in the cell inner membrane. Could be involved in insertion of integral membrane proteins into the membrane. This is Putative membrane protein insertion efficiency factor from Gloeothece citriformis (strain PCC 7424) (Cyanothece sp. (strain PCC 7424)).